Reading from the N-terminus, the 358-residue chain is tRNA (guanine(26)-N(2))-dimethyltransferase (358 aa).

Residues 5-354 (VIRREGKAVF…ATYGEVERVL (350 aa)) enclose the Trm1 methyltransferase domain. Positions 39, 69, 87, 113, and 114 each coordinate S-adenosyl-L-methionine.

This sequence belongs to the class I-like SAM-binding methyltransferase superfamily. Trm1 family.

The enzyme catalyses guanosine(26) in tRNA + 2 S-adenosyl-L-methionine = N(2)-dimethylguanosine(26) in tRNA + 2 S-adenosyl-L-homocysteine + 2 H(+). Dimethylates a single guanine residue at position 26 of a number of tRNAs using S-adenosyl-L-methionine as donor of the methyl groups. This chain is tRNA (guanine(26)-N(2))-dimethyltransferase, found in Pyrobaculum calidifontis (strain DSM 21063 / JCM 11548 / VA1).